Reading from the N-terminus, the 475-residue chain is Pregnancy-specific glycoprotein 22 (475 aa).

Positions M1–G35 are cleaved as a signal peptide. 3 consecutive Ig-like V-type domains span residues K44–V140, P162–V260, and P280–V380. 3 N-linked (GlcNAc...) asparagine glycosylation sites follow: N103, N110, and N231. An Ig-like C2-type domain is found at P387–T471. C406 and C454 form a disulfide bridge.

The protein belongs to the immunoglobulin superfamily. CEA family.

Its subcellular location is the secreted. In terms of biological role, may have an angiogenic function during early placental development. Binds to cell-surface heparan sulfate proteoglycans (HSPGs), and stimulates secretion of the proangiogenic factors VEGFA and TGFB from uterine dendritic cells and natural killer cells. Also induces endothelial tube formation in vitro. This Mus musculus (Mouse) protein is Pregnancy-specific glycoprotein 22.